The sequence spans 77 residues: Small nuclear ribonucleoprotein G (77 aa).

A Sm domain is found at 4 to 76 (AGAPDLKKYL…VIMIETLDKM (73 aa)).

It belongs to the snRNP Sm proteins family. As to quaternary structure, belongs to the 40S cdc5-associated complex (or cwf complex), a spliceosome sub-complex reminiscent of a late-stage spliceosome composed of the U2, U5 and U6 snRNAs and at least brr2, cdc5, cwf2/prp3, cwf3/syf1, cwf4/syf3, cwf5/ecm2, spp42/cwf6, cwf7/spf27, cwf8, cwf9, cwf10, cwf11, cwf12, prp45/cwf13, cwf14, cwf15, cwf16, cwf17, cwf18, cwf19, cwf20, cwf21, cwf22, cwf23, cwf24, cwf25, cwf26, cyp7/cwf27, cwf28, cwf29/ist3, lea1, msl1, prp5/cwf1, prp10, prp12/sap130, prp17, prp22, sap61, sap62, sap114, sap145, slu7, smb1, smd1, smd3, smf1, smg1 and syf2.

The protein localises to the nucleus. It is found in the cytoplasm. Functionally, plays a role in pre-mRNA splicing as a core component of the spliceosomal U1, U2, U4 and U5 small nuclear ribonucleoproteins (snRNPs), the building blocks of the spliceosome. The sequence is that of Small nuclear ribonucleoprotein G (smg1) from Schizosaccharomyces pombe (strain 972 / ATCC 24843) (Fission yeast).